Consider the following 578-residue polypeptide: MITQEEKLAALGKTCLTLKQEKKLAQAVALIDSELPTEALTSLAMLKKAEFLHDVNETERAYALYETLIAQNNDEARYEYARRLYNTGLAKDAQLILKKVSNGVQKKYNNYLGKINKICDLLERLEGKAIPVGTNTCIIAMKHAILFYRNRQPRQLPVGSFGRLALCTGSLGSGGAERQISRLAIEIARKYRQKGKIGGLKVEEPVELIIRSLTPELRQDFFLKEVLEEQVEVLEIAKITGNLFDDATIESPELRLLLSHLPPVCKYGIKHLVPHLCERKLDYLSVWQDSACLMIALAALIAGVPRIQLGLRGLPPVVRKRLFKPEYEPLYQALAVVPGVDFMSNNHCVTRHYADWLKLEAKHFQVVYNGVLPPSTEPSSEVPHKIWQQFTQKTQDADTTIGGVFRFVGDKNPFAWIDFAARYLQHHPATRFVLVGDGDLRAEAQKRAEQLGILERILFVGASRDVGYWLQKMNVFILFSRYEGLPNVLIEAQMVGVPVISTPAGGSAECFIEGVSGFILDDAQTVNLDQACRYAEKLVNLWRSRTGICQQTQSFLQERFTVEHMVGTFVKTIASQPR.

The protein operates within glycan metabolism; Vi-antigen biosynthesis. Its pathway is capsule biogenesis; capsule polysaccharide biosynthesis. This is Vi polysaccharide biosynthesis protein VipC/TviE (vipC) from Salmonella typhi.